The following is a 116-amino-acid chain: NADH-ubiquinone oxidoreductase chain 3 (116 aa).

3 consecutive transmembrane segments (helical) span residues 6–26, 56–76, and 85–105; these read FMLL…FWLA, FFLV…LLPL, and PLLT…GLVY.

It belongs to the complex I subunit 3 family.

Its subcellular location is the mitochondrion membrane. The catalysed reaction is a ubiquinone + NADH + 5 H(+)(in) = a ubiquinol + NAD(+) + 4 H(+)(out). Its function is as follows. Core subunit of the mitochondrial membrane respiratory chain NADH dehydrogenase (Complex I) that is believed to belong to the minimal assembly required for catalysis. Complex I functions in the transfer of electrons from NADH to the respiratory chain. The immediate electron acceptor for the enzyme is believed to be ubiquinone. The chain is NADH-ubiquinone oxidoreductase chain 3 (MT-ND3) from Struthio camelus (Common ostrich).